Reading from the N-terminus, the 317-residue chain is Ferrochelatase (317 aa).

Residues histidine 192 and glutamate 271 each coordinate Fe cation.

This sequence belongs to the ferrochelatase family.

It localises to the cytoplasm. It catalyses the reaction heme b + 2 H(+) = protoporphyrin IX + Fe(2+). The protein operates within porphyrin-containing compound metabolism; protoheme biosynthesis; protoheme from protoporphyrin-IX: step 1/1. Its function is as follows. Catalyzes the ferrous insertion into protoporphyrin IX. In Geobacter sp. (strain M21), this protein is Ferrochelatase.